Reading from the N-terminus, the 239-residue chain is Serine protease SplC (239 aa).

An N-terminal signal peptide occupies residues 1–36 (MNKNIVIKSMAALAILTSATGINAAVVEETQQIANA). Catalysis depends on charge relay system residues His-75, Asp-113, and Ser-193.

It belongs to the peptidase S1B family.

It localises to the secreted. This is Serine protease SplC (splC) from Staphylococcus aureus (strain MSSA476).